The primary structure comprises 481 residues: Cys-Gly metallodipeptidase DUG1 (481 aa).

A Zn(2+)-binding site is contributed by His102. Residue Asp104 is part of the active site. Asp137 is a Zn(2+) binding site. The Proton acceptor role is filled by Glu171. 3 residues coordinate Zn(2+): Glu172, Asp200, and His450. Ser451 is modified (phosphoserine).

This sequence belongs to the peptidase M20A family. In terms of assembly, homodimer. Component of the GSH degradosomal complex composed of at least DUG1, DUG2 and DUG3. Requires Zn(2+) as cofactor. The cofactor is Mn(2+).

Its subcellular location is the cytoplasm. The protein localises to the mitochondrion. Catalytic component of the GSH degradosomal complex involved in the degradation of glutathione (GSH) and other peptides containing a gamma-glu-X bond. Also functions in a DUG2-DUG3-independent manner as a dipeptidase with high specificity for Cys-Gly and no activity toward tri- or tetrapeptides. In Saccharomyces cerevisiae (strain ATCC 204508 / S288c) (Baker's yeast), this protein is Cys-Gly metallodipeptidase DUG1 (DUG1).